The sequence spans 229 residues: ATP synthase subunit a (229 aa).

Transmembrane regions (helical) follow at residues 24-44 (RLCF…LLFC), 45-65 (LFDL…FMLF), 83-103 (LLFC…CFLC), 117-137 (FMDV…SLLC), 143-163 (FLRL…FFDF), 177-199 (CYFI…LYLL), and 206-228 (LQLF…FLLF).

This sequence belongs to the ATPase A chain family. F-type ATPases have 2 components, CF(1) - the catalytic core - and CF(0) - the membrane proton channel. CF(1) has five subunits: alpha(3), beta(3), gamma(1), delta(1), epsilon(1). CF(0) has three main subunits: a, b and c.

The protein localises to the mitochondrion inner membrane. Its function is as follows. Mitochondrial membrane ATP synthase (F(1)F(0) ATP synthase or Complex V) produces ATP from ADP in the presence of a proton gradient across the membrane which is generated by electron transport complexes of the respiratory chain. F-type ATPases consist of two structural domains, F(1) - containing the extramembraneous catalytic core and F(0) - containing the membrane proton channel, linked together by a central stalk and a peripheral stalk. During catalysis, ATP synthesis in the catalytic domain of F(1) is coupled via a rotary mechanism of the central stalk subunits to proton translocation. Key component of the proton channel; it may play a direct role in the translocation of protons across the membrane. In Trypanosoma brucei brucei, this protein is ATP synthase subunit a (ATP6).